The following is an 80-amino-acid chain: MTNTKTLEANISFEEALKELEEIVKKIDNGQESLETAVNSFERGILLKNHCEKKLKEARLKIEKITKLADSTVVLEEMEV.

Belongs to the XseB family. As to quaternary structure, heterooligomer composed of large and small subunits.

It is found in the cytoplasm. The catalysed reaction is Exonucleolytic cleavage in either 5'- to 3'- or 3'- to 5'-direction to yield nucleoside 5'-phosphates.. Its function is as follows. Bidirectionally degrades single-stranded DNA into large acid-insoluble oligonucleotides, which are then degraded further into small acid-soluble oligonucleotides. The protein is Exodeoxyribonuclease 7 small subunit of Rickettsia conorii (strain ATCC VR-613 / Malish 7).